The sequence spans 139 residues: Transcription antitermination protein NusB (139 aa).

Belongs to the NusB family.

Its function is as follows. Involved in transcription antitermination. Required for transcription of ribosomal RNA (rRNA) genes. Binds specifically to the boxA antiterminator sequence of the ribosomal RNA (rrn) operons. This is Transcription antitermination protein NusB from Rubrobacter xylanophilus (strain DSM 9941 / JCM 11954 / NBRC 16129 / PRD-1).